A 208-amino-acid chain; its full sequence is Type 3 secretion system stator protein (208 aa).

It belongs to the SctL stator family. The core secretion machinery of the T3SS is composed of approximately 20 different proteins, including cytoplasmic components, a base, an export apparatus and a needle. This subunit is part of the cytosolic complex.

It is found in the cytoplasm. Component of the type III secretion system (T3SS), also called injectisome, which is used to inject bacterial effector proteins into eukaryotic host cells. Acts as a regulator of the HrcN/SctN ATPase activity. This Sinorhizobium fredii (strain NBRC 101917 / NGR234) protein is Type 3 secretion system stator protein.